We begin with the raw amino-acid sequence, 360 residues long: uncharacterized protein (360 aa).

Residues 19–179 (LALGSGGARG…LDPLPMAPIA (161 aa)) enclose the PNPLA domain. The short motif at 50–54 (GSSMG) is the GXSXG element. The Nucleophile role is filled by Ser-52. The active-site Proton acceptor is the Asp-166. Residues 166-168 (DGG) carry the DGA/G motif. The disordered stretch occupies residues 251–282 (DSWSQAPEIEQRPAGPPADREEAADTPGLPKM).

It belongs to the NTE family.

This is an uncharacterized protein from Mycobacterium bovis (strain ATCC BAA-935 / AF2122/97).